We begin with the raw amino-acid sequence, 186 residues long: Ribosome-recycling factor (186 aa).

It belongs to the RRF family.

It localises to the cytoplasm. In terms of biological role, responsible for the release of ribosomes from messenger RNA at the termination of protein biosynthesis. May increase the efficiency of translation by recycling ribosomes from one round of translation to another. The chain is Ribosome-recycling factor from Burkholderia cenocepacia (strain HI2424).